The chain runs to 258 residues: Phosphate import ATP-binding protein PstB 2 (258 aa).

The region spanning 12 to 253 (IQVRDLNFYY…PQQKQTEDYI (242 aa)) is the ABC transporter domain. 44-51 (GPSGCGKS) lines the ATP pocket.

Belongs to the ABC transporter superfamily. Phosphate importer (TC 3.A.1.7) family. The complex is composed of two ATP-binding proteins (PstB), two transmembrane proteins (PstC and PstA) and a solute-binding protein (PstS).

The protein localises to the cell inner membrane. The enzyme catalyses phosphate(out) + ATP + H2O = ADP + 2 phosphate(in) + H(+). Part of the ABC transporter complex PstSACB involved in phosphate import. Responsible for energy coupling to the transport system. The protein is Phosphate import ATP-binding protein PstB 2 of Yersinia pestis bv. Antiqua (strain Nepal516).